The sequence spans 207 residues: Guanylate kinase (207 aa).

A Guanylate kinase-like domain is found at 7–185; it reads GIVLVLCAPS…AYDELRAAYI (179 aa). Residue 14–21 participates in ATP binding; sequence APSGTGKT.

It belongs to the guanylate kinase family.

Its subcellular location is the cytoplasm. The enzyme catalyses GMP + ATP = GDP + ADP. Functionally, essential for recycling GMP and indirectly, cGMP. This Nitratidesulfovibrio vulgaris (strain ATCC 29579 / DSM 644 / CCUG 34227 / NCIMB 8303 / VKM B-1760 / Hildenborough) (Desulfovibrio vulgaris) protein is Guanylate kinase.